The primary structure comprises 346 residues: Protein RecA (346 aa).

67–74 (GPESSGKT) contacts ATP.

This sequence belongs to the RecA family.

The protein resides in the cytoplasm. In terms of biological role, can catalyze the hydrolysis of ATP in the presence of single-stranded DNA, the ATP-dependent uptake of single-stranded DNA by duplex DNA, and the ATP-dependent hybridization of homologous single-stranded DNAs. It interacts with LexA causing its activation and leading to its autocatalytic cleavage. The sequence is that of Protein RecA from Frankia alni (strain DSM 45986 / CECT 9034 / ACN14a).